Reading from the N-terminus, the 793-residue chain is Ferredoxin/F(420)H(2)-dependent CoB-CoM heterodisulfide reductase subunit A (793 aa).

147 to 170 (GGGVAGIEAALNLAEAGFPVTMVE) contributes to the FAD binding site. 4 consecutive 4Fe-4S ferredoxin-type domains span residues 233–264 (RKPR…PMNY), 282–311 (QVVL…YEQK), 571–600 (MGAH…IENK), and 601–629 (KAVV…MRNF). Positions 243, 246, 250, 254, 291, 294, 297, 301, 580, 583, 586, 590, 609, 612, 615, and 619 each coordinate [4Fe-4S] cluster.

It belongs to the HdrA family. In terms of assembly, the ferredoxin/F(420)H(2)-dependent CoB-CoM heterodisulfide reductase is composed of three subunits; HdrA2, HdrB2 and HdrC2. Requires [4Fe-4S] cluster as cofactor. [2Fe-2S] cluster serves as cofactor. The cofactor is FAD.

It is found in the cytoplasm. It carries out the reaction coenzyme B + coenzyme M + 2 oxidized [2Fe-2S]-[ferredoxin] = coenzyme M-coenzyme B heterodisulfide + 2 reduced [2Fe-2S]-[ferredoxin] + 2 H(+). It catalyses the reaction coenzyme B + 2 oxidized coenzyme F420-(gamma-L-Glu)(n) + coenzyme M + 2 reduced [2Fe-2S]-[ferredoxin] + 4 H(+) = coenzyme M-coenzyme B heterodisulfide + 2 reduced coenzyme F420-(gamma-L-Glu)(n) + 2 oxidized [2Fe-2S]-[ferredoxin]. The protein operates within cofactor metabolism; coenzyme M-coenzyme B heterodisulfide reduction; coenzyme B and coenzyme M from coenzyme M-coenzyme B heterodisulfide: step 1/1. Its function is as follows. Part of a complex that catalyzes the reversible reduction of CoM-S-S-CoB to the thiol-coenzymes H-S-CoM (coenzyme M) and H-S-CoB (coenzyme B). Catalyzes the transfer of electrons from ferredoxin to CoM-S-S-CoB during methanogenesis from acetate. Electrons transfer from ferredoxin to CoM-S-S-CoB via HdrA2, HdrC2 and HdrB2. In addition, the complex can use electron bifurcation to direct electron pairs from reduced coenzyme F420 towards the reduction of both ferredoxin and CoB-CoM heterodisulfide. This activity may take place during Fe(III)-dependent anaerobic methane oxidation. The chain is Ferredoxin/F(420)H(2)-dependent CoB-CoM heterodisulfide reductase subunit A from Methanosarcina acetivorans (strain ATCC 35395 / DSM 2834 / JCM 12185 / C2A).